A 277-amino-acid polypeptide reads, in one-letter code: Eukaryotic translation initiation factor 3 subunit J (277 aa).

Residues 1–80 (MSWDDEDFAV…PAATKNTMLD (80 aa)) are disordered. The span at 23–43 (WDDEFAENDDEPVLESWEDEE) shows a compositional bias: acidic residues. Positions 50-75 (KAAAAAAAKAPKKASPSPAATPAATK) are enriched in low complexity. Residues 199–230 (TVENIRQTIATLNVLMKDKEREERQARLAKVK) adopt a coiled-coil conformation. Residues 257–277 (DNDFDLGGNDNFDDFGEDDFM) are disordered. Residues 267 to 277 (NFDDFGEDDFM) show a composition bias toward acidic residues.

Belongs to the eIF-3 subunit J family. In terms of assembly, component of the eukaryotic translation initiation factor 3 (eIF-3) complex.

It is found in the cytoplasm. In terms of biological role, component of the eukaryotic translation initiation factor 3 (eIF-3) complex, which is involved in protein synthesis of a specialized repertoire of mRNAs and, together with other initiation factors, stimulates binding of mRNA and methionyl-tRNAi to the 40S ribosome. The eIF-3 complex specifically targets and initiates translation of a subset of mRNAs involved in cell proliferation. The protein is Eukaryotic translation initiation factor 3 subunit J of Kluyveromyces lactis (strain ATCC 8585 / CBS 2359 / DSM 70799 / NBRC 1267 / NRRL Y-1140 / WM37) (Yeast).